Reading from the N-terminus, the 668-residue chain is Chitin synthase 8 (668 aa).

The span at 1 to 26 (MTSRMPTSGHRTSSSSSERGNMSVQQ) shows a compositional bias: polar residues. Residues 1 to 62 (MTSRMPTSGH…PAPLRPGWTL (62 aa)) form a disordered region. Residues Asn-21, Asn-98, and Asn-101 are each glycosylated (N-linked (GlcNAc...) asparagine). 2 helical membrane passes run 136 to 156 (WSLI…GWKY) and 162 to 182 (FFLV…ICII). N-linked (GlcNAc...) asparagine glycans are attached at residues Asn-216 and Asn-476. Helical transmembrane passes span 522–542 (WALG…IILI), 548–568 (LIAV…VELL), 583–603 (VFLG…CIGF), and 615–635 (YFAG…IILV).

Belongs to the chitin synthase family. Class VIII subfamily.

It localises to the cell membrane. It is found in the cell septum. It catalyses the reaction [(1-&gt;4)-N-acetyl-beta-D-glucosaminyl](n) + UDP-N-acetyl-alpha-D-glucosamine = [(1-&gt;4)-N-acetyl-beta-D-glucosaminyl](n+1) + UDP + H(+). Functionally, polymerizes chitin, a structural polymer of the cell wall and septum, by transferring the sugar moiety of UDP-GlcNAc to the non-reducing end of the growing chitin polymer. Participated in the development of cell wall and plays a critical role in fungal response to environmental stresses. Necessary for pathogenicity and deoxinivalenol (DON) production. The sequence is that of Chitin synthase 8 from Gibberella zeae (strain ATCC MYA-4620 / CBS 123657 / FGSC 9075 / NRRL 31084 / PH-1) (Wheat head blight fungus).